Reading from the N-terminus, the 153-residue chain is Putative transcription factor YdeB (153 aa).

The protein belongs to the CarD family.

This is Putative transcription factor YdeB (ydeB) from Bacillus subtilis (strain 168).